We begin with the raw amino-acid sequence, 210 residues long: Transposable element activator uncharacterized 23 kDa protein (210 aa).

Residues Ser-67–Arg-78 show a composition bias toward basic and acidic residues. Residues Ser-67 to Gly-87 form a disordered region.

The polypeptide is Transposable element activator uncharacterized 23 kDa protein (Zea mays (Maize)).